A 100-amino-acid chain; its full sequence is NADH-quinone oxidoreductase subunit K 2 (100 aa).

A run of 3 helical transmembrane segments spans residues 4–24, 28–48, and 60–80; these read LWWY…GVLI, ILVV…NFIA, and IFAI…LGIL.

It belongs to the complex I subunit 4L family. As to quaternary structure, NDH-1 is composed of 14 different subunits. Subunits NuoA, H, J, K, L, M, N constitute the membrane sector of the complex.

Its subcellular location is the cell inner membrane. The enzyme catalyses a quinone + NADH + 5 H(+)(in) = a quinol + NAD(+) + 4 H(+)(out). NDH-1 shuttles electrons from NADH, via FMN and iron-sulfur (Fe-S) centers, to quinones in the respiratory chain. The immediate electron acceptor for the enzyme in this species is believed to be ubiquinone. Couples the redox reaction to proton translocation (for every two electrons transferred, four hydrogen ions are translocated across the cytoplasmic membrane), and thus conserves the redox energy in a proton gradient. The protein is NADH-quinone oxidoreductase subunit K 2 of Rhizobium etli (strain ATCC 51251 / DSM 11541 / JCM 21823 / NBRC 15573 / CFN 42).